Here is a 378-residue protein sequence, read N- to C-terminus: Putative glutamate--cysteine ligase 2 (378 aa).

The protein belongs to the glutamate--cysteine ligase type 2 family. YbdK subfamily.

It catalyses the reaction L-cysteine + L-glutamate + ATP = gamma-L-glutamyl-L-cysteine + ADP + phosphate + H(+). Functionally, ATP-dependent carboxylate-amine ligase which exhibits weak glutamate--cysteine ligase activity. This chain is Putative glutamate--cysteine ligase 2, found in Salinispora tropica (strain ATCC BAA-916 / DSM 44818 / JCM 13857 / NBRC 105044 / CNB-440).